Consider the following 125-residue polypeptide: uncharacterized protein (125 aa).

Residues 15-121 (QINQSIIDVI…HSLVLEQKQL (107 aa)) enclose the PRD domain.

This is an uncharacterized protein from Haemophilus influenzae (strain ATCC 51907 / DSM 11121 / KW20 / Rd).